The sequence spans 156 residues: Endoribonuclease YbeY (156 aa).

Zn(2+) contacts are provided by His-119, His-123, and His-129.

The protein belongs to the endoribonuclease YbeY family. It depends on Zn(2+) as a cofactor.

It is found in the cytoplasm. Functionally, single strand-specific metallo-endoribonuclease involved in late-stage 70S ribosome quality control and in maturation of the 3' terminus of the 16S rRNA. This chain is Endoribonuclease YbeY, found in Buchnera aphidicola subsp. Cinara cedri (strain Cc).